A 236-amino-acid chain; its full sequence is Sperm flagellar protein 1 (236 aa).

The 106-residue stretch at 7–112 (EEALHQLYLW…VLIPLRQRLE (106 aa)) folds into the Calponin-homology (CH) domain. Positions 115–176 (QRRRKQGAGS…PRPPAYNRAL (62 aa)) are disordered. Residues 183 to 236 (VLQIAEKEQELLASQETVQVLQMKVRRLEHLLQLKNVRIEDLSRRLQQAERKQR) form an essential for homodimerization and microtubule bundling activity region.

As to quaternary structure, homodimer. Interacts with actin, TJP1, CGN and CDH1. In terms of tissue distribution, expressed in the intestinal epithelial cells (at protein level).

The protein localises to the cytoplasm. The protein resides in the cell projection. It localises to the cilium. Its subcellular location is the flagellum. It is found in the cytoskeleton. The protein localises to the cilium axoneme. The protein resides in the apical cell membrane. It localises to the basolateral cell membrane. Its subcellular location is the stress fiber. It is found in the microvillus. The protein localises to the lamellipodium. The protein resides in the filopodium. In terms of biological role, microtubule-associated protein involved in the stabilization of microtubules along the axis of migration during radial intercalation. Promotes the establishment and stabilization of an axis of microtubules required for the active migration of cells into the outer epithelium. Microtubule-associated protein that promotes microtubule bundling and stabilizes microtubules against depolymerization in response to cold shock. Essential for ciliary central apparatus formation which requires both its microtubule-binding and bundling activities and for ciliary localization of HYDIN and SPAG6 in ependymal cilia. Binds actin in intestinal epithelial cells (IECs), essential for IECs survival and contributes to formation of filopodia and lamellipodia in migrating IECs. Regulates planar cell polarity signaling pathway and asymmetric microtubule accumulation in ciliated epithelia. The polypeptide is Sperm flagellar protein 1 (SPEF1) (Homo sapiens (Human)).